Here is a 337-residue protein sequence, read N- to C-terminus: MIEIDGSFGEGGGQILRTSLTLSVITGKPFRIFNIRANRPNPGLQRQHLWAVKAMKMISNAETKGDEVGSKELIFVPHEIKGNTNIDIDVGTAGSVTLIIQTVLPAIINKNVRIRIKGGTDVPKSPTIDYIRLVYLEILRKIGIEAKLNLIKRGHYPEGGGEVIIENVNGNPSAFSLLELGKLTIIKGISHVSSLPAHIAERQMNSAREILSKLGVPIEIQTDVRQGEVSKGSGIALAAIGEKSIIGADSLGERGKRAEIVGEEAARILIDNLNTKASVDIHMSDMLMIFASLYGGEYIGAELTSHAYTNMEIIKKFLDIKIDVSGKRPFRFKAKIF.

ATP contacts are provided by residues Q101 and 282 to 285 (HMSD). Catalysis depends on H306, which acts as the Tele-AMP-histidine intermediate.

It belongs to the RNA 3'-terminal cyclase family. Type 1 subfamily.

Its subcellular location is the cytoplasm. It carries out the reaction a 3'-end 3'-phospho-ribonucleotide-RNA + ATP = a 3'-end 2',3'-cyclophospho-ribonucleotide-RNA + AMP + diphosphate. Catalyzes the conversion of 3'-phosphate to a 2',3'-cyclic phosphodiester at the end of RNA. The mechanism of action of the enzyme occurs in 3 steps: (A) adenylation of the enzyme by ATP; (B) transfer of adenylate to an RNA-N3'P to produce RNA-N3'PP5'A; (C) and attack of the adjacent 2'-hydroxyl on the 3'-phosphorus in the diester linkage to produce the cyclic end product. The biological role of this enzyme is unknown but it is likely to function in some aspects of cellular RNA processing. The protein is RNA 3'-terminal phosphate cyclase of Saccharolobus islandicus (strain M.16.4 / Kamchatka #3) (Sulfolobus islandicus).